The primary structure comprises 206 residues: Adenylyl-sulfate kinase (206 aa).

An ATP-binding site is contributed by 31–38; that stretch reads GLSASGKS. Ser105 (phosphoserine intermediate) is an active-site residue.

Belongs to the APS kinase family.

The enzyme catalyses adenosine 5'-phosphosulfate + ATP = 3'-phosphoadenylyl sulfate + ADP + H(+). Its pathway is sulfur metabolism; hydrogen sulfide biosynthesis; sulfite from sulfate: step 2/3. In terms of biological role, catalyzes the synthesis of activated sulfate. In Emericella nidulans (strain FGSC A4 / ATCC 38163 / CBS 112.46 / NRRL 194 / M139) (Aspergillus nidulans), this protein is Adenylyl-sulfate kinase (sD).